The following is a 246-amino-acid chain: Probable transcriptional regulatory protein HS_0508 (246 aa).

This sequence belongs to the TACO1 family.

It is found in the cytoplasm. This chain is Probable transcriptional regulatory protein HS_0508, found in Histophilus somni (strain 129Pt) (Haemophilus somnus).